Reading from the N-terminus, the 198-residue chain is Proteasome subunit beta 2 (198 aa).

A propeptide spans 1–4 (MVLA) (removed in mature form; by autocatalysis). Threonine 5 serves as the catalytic Nucleophile.

This sequence belongs to the peptidase T1B family. In terms of assembly, the 20S proteasome core is composed of 14 alpha and 14 beta subunits that assemble into four stacked heptameric rings, resulting in a barrel-shaped structure. The two inner rings, each composed of seven catalytic beta subunits, are sandwiched by two outer rings, each composed of seven alpha subunits. The catalytic chamber with the active sites is on the inside of the barrel. Has a gated structure, the ends of the cylinder being occluded by the N-termini of the alpha-subunits. Is capped at one or both ends by the proteasome regulatory ATPase, PAN.

The protein resides in the cytoplasm. The enzyme catalyses Cleavage of peptide bonds with very broad specificity.. With respect to regulation, the formation of the proteasomal ATPase PAN-20S proteasome complex, via the docking of the C-termini of PAN into the intersubunit pockets in the alpha-rings, triggers opening of the gate for substrate entry. Interconversion between the open-gate and close-gate conformations leads to a dynamic regulation of the 20S proteasome proteolysis activity. In terms of biological role, component of the proteasome core, a large protease complex with broad specificity involved in protein degradation. This Korarchaeum cryptofilum (strain OPF8) protein is Proteasome subunit beta 2.